We begin with the raw amino-acid sequence, 176 residues long: Large ribosomal subunit protein uL10 (176 aa).

The protein belongs to the universal ribosomal protein uL10 family. Part of the ribosomal stalk of the 50S ribosomal subunit. The N-terminus interacts with L11 and the large rRNA to form the base of the stalk. The C-terminus forms an elongated spine to which L12 dimers bind in a sequential fashion forming a multimeric L10(L12)X complex.

In terms of biological role, forms part of the ribosomal stalk, playing a central role in the interaction of the ribosome with GTP-bound translation factors. The sequence is that of Large ribosomal subunit protein uL10 from Alcanivorax borkumensis (strain ATCC 700651 / DSM 11573 / NCIMB 13689 / SK2).